Consider the following 545-residue polypeptide: Pentatricopeptide repeat-containing protein At4g18840 (545 aa).

PPR repeat units follow at residues 104 to 138 (NGFTHNSVIRAYANSSTPEVALTVFREMLLGPVFP), 139 to 173 (DKYSFTFVLKACAAFCGFEEGRQIHGLFIKSGLVT), 174 to 204 (DVFVENTLVNVYGRSGYFEIARKVLDRMPVR), 205 to 239 (DAVSWNSLLSAYLEKGLVDEARALFDEMEERNVES), 240 to 266 (WNFMISGYAAAGLVKEAKEVFDSMPVR), 267 to 301 (DVVSWNAMVTAYAHVGCYNEVLEVFNKMLDDSTEK), 303 to 337 (DGFTLVSVLSACASLGSLSQGEWVHVYIDKHGIEI), 338 to 368 (EGFLATALVDMYSKCGKIDKALEVFRATSKR), 369 to 403 (DVSTWNSIISDLSVHGLGKDALEIFSEMVYEGFKP), 404 to 434 (NGITFIGVLSACNHVGMLDQARKLFEMMSSV), and 440 to 474 (TIEHYGCMVDLLGRMGKIEEAEELVNEIPADEASI). The interval 475–545 (LLESLLGACK…ERVNRSLDVA (71 aa)) is type E motif.

Belongs to the PPR family. PCMP-E subfamily.

The chain is Pentatricopeptide repeat-containing protein At4g18840 (PCMP-E101) from Arabidopsis thaliana (Mouse-ear cress).